The sequence spans 201 residues: Imidazoleglycerol-phosphate dehydratase (201 aa).

The protein belongs to the imidazoleglycerol-phosphate dehydratase family.

The protein resides in the cytoplasm. It carries out the reaction D-erythro-1-(imidazol-4-yl)glycerol 3-phosphate = 3-(imidazol-4-yl)-2-oxopropyl phosphate + H2O. Its pathway is amino-acid biosynthesis; L-histidine biosynthesis; L-histidine from 5-phospho-alpha-D-ribose 1-diphosphate: step 6/9. The protein is Imidazoleglycerol-phosphate dehydratase of Prochlorococcus marinus (strain AS9601).